The chain runs to 625 residues: DNA mismatch repair protein MutL (625 aa).

Belongs to the DNA mismatch repair MutL/HexB family.

Its function is as follows. This protein is involved in the repair of mismatches in DNA. It is required for dam-dependent methyl-directed DNA mismatch repair. May act as a 'molecular matchmaker', a protein that promotes the formation of a stable complex between two or more DNA-binding proteins in an ATP-dependent manner without itself being part of a final effector complex. The sequence is that of DNA mismatch repair protein MutL from Xanthomonas axonopodis pv. citri (strain 306).